We begin with the raw amino-acid sequence, 281 residues long: Putative rRNA methyltransferase YqxC (281 aa).

The 62-residue stretch at Glu-6–Gly-67 folds into the S4 RNA-binding domain.

This sequence belongs to the TlyA family.

This is Putative rRNA methyltransferase YqxC (yqxC) from Bacillus subtilis (strain 168).